The primary structure comprises 39 residues: QVRKYCPKVGYCSSKCSKADVWSLSSDCKFYCCLPPGWK.

The residue at position 1 (glutamine 1) is a Pyrrolidone carboxylic acid. Intrachain disulfides connect cysteine 6–cysteine 33, cysteine 12–cysteine 28, and cysteine 16–cysteine 32.

This sequence belongs to the transferrin family.

The chain is Cygnin from Cygnus atratus (Black swan).